A 140-amino-acid chain; its full sequence is MAFFKSAVFLVCVVLAAAGSASRSKRALVGGWKTQDPTNPKFENLAHYAVSTQVEGREYYDTVLELLEVQTQIVAGVNYKLKFTTTQSTCKIETGVEYSKELCQPKTNKVEAVCTSIIYTVPWQNIKRVLSYHCDAPNDV.

The signal sequence occupies residues 1 to 18; the sequence is MAFFKSAVFLVCVVLAAA. Disulfide bonds link C90–C103 and C114–C134.

This sequence belongs to the cystatin family. As to expression, expressed in midgut (at protein level).

Its subcellular location is the secreted. Inhibitor of cysteine proteinases. Inhibits several endogenous midgut digestive cysteine proteases, such as cathepsin L1, L3, B and C, but not aspartic protease cathepsin D1 and cysteine protease legumain. Inhibits proteolysis of blood proteins catalyzed by tick gut cysteine cathepsins. Inhibits host cathepsin B (CSTB), C (CTSC), H (CTSH), K (CTSK), L (CTSL) and S (CTSS). The polypeptide is Mialostatin (Ixodes ricinus (Common tick)).